The sequence spans 279 residues: DegV domain-containing protein CA_C0701 (279 aa).

The region spanning isoleucine 4–glutamate 277 is the DegV domain. Positions 62 and 94 each coordinate hexadecanoate.

In terms of biological role, may bind long-chain fatty acids, such as palmitate, and may play a role in lipid transport or fatty acid metabolism. This Clostridium acetobutylicum (strain ATCC 824 / DSM 792 / JCM 1419 / IAM 19013 / LMG 5710 / NBRC 13948 / NRRL B-527 / VKM B-1787 / 2291 / W) protein is DegV domain-containing protein CA_C0701.